The sequence spans 225 residues: Redox-sensing transcriptional repressor Rex (225 aa).

The segment at residues 16-55 (IYYRYLNILLDADKKRVSSTELSEAVKVDSATIRRDFSYF) is a DNA-binding region (H-T-H motif). Residue 90-95 (GVGNLG) coordinates NAD(+).

Belongs to the transcriptional regulatory Rex family. Homodimer.

The protein resides in the cytoplasm. Its function is as follows. Modulates transcription in response to changes in cellular NADH/NAD(+) redox state. This is Redox-sensing transcriptional repressor Rex from Lactiplantibacillus plantarum (strain ATCC BAA-793 / NCIMB 8826 / WCFS1) (Lactobacillus plantarum).